Consider the following 60-residue polypeptide: Conotoxin Pu5.6 (60 aa).

Residues 1 to 19 (MRCVPVFVILLLLIASAAS) form the signal peptide. Positions 20–47 (IDAQQKTKDDAPLTSLNDNALQQHWNKR) are excised as a propeptide.

This sequence belongs to the conotoxin T superfamily. Post-translationally, contains 2 disulfide bonds that can be either 'C1-C3, C2-C4' or 'C1-C4, C2-C3', since these disulfide connectivities have been observed for conotoxins with cysteine framework V (for examples, see AC P0DQQ7 and AC P81755). As to expression, expressed by the venom duct.

The protein resides in the secreted. This chain is Conotoxin Pu5.6, found in Conus pulicarius (Flea-bitten cone).